The following is a 295-amino-acid chain: 4-hydroxy-tetrahydrodipicolinate synthase (295 aa).

Thr46 is a pyruvate binding site. The Proton donor/acceptor role is filled by Tyr134. Lys162 serves as the catalytic Schiff-base intermediate with substrate. Ile205 contacts pyruvate.

It belongs to the DapA family. Homotetramer; dimer of dimers.

Its subcellular location is the cytoplasm. It carries out the reaction L-aspartate 4-semialdehyde + pyruvate = (2S,4S)-4-hydroxy-2,3,4,5-tetrahydrodipicolinate + H2O + H(+). The protein operates within amino-acid biosynthesis; L-lysine biosynthesis via DAP pathway; (S)-tetrahydrodipicolinate from L-aspartate: step 3/4. Functionally, catalyzes the condensation of (S)-aspartate-beta-semialdehyde [(S)-ASA] and pyruvate to 4-hydroxy-tetrahydrodipicolinate (HTPA). The chain is 4-hydroxy-tetrahydrodipicolinate synthase from Anaeromyxobacter sp. (strain Fw109-5).